The primary structure comprises 360 residues: Hydroxyproline O-arabinosyltransferase RDN2 (360 aa).

Residues Val-13–Ala-33 traverse the membrane as a helical; Signal-anchor segment.

The protein resides in the golgi apparatus membrane. It carries out the reaction trans-4-hydroxy-L-prolyl-[protein] + UDP-beta-L-arabinofuranose = O-(beta-L-arabinofuranosyl)-trans-4-hydroxy-L-prolyl-[protein] + UDP + H(+). In terms of biological role, glycosyltransferase involved in the O-arabinosylation of several proteins including extensins and small signaling peptides. Catalyzes the transfer of the initial L-arabinose to the hydroxyl group of Hyp residues. Probably involved in the arabinosylation of CLAVATA3/ESR-related (CLE) signaling peptides that move from root to shoot, to interact with SUNN receptor kinase signaling that regulates nodulation. Involved in long distance nodulation signaling events. Involved in the autoregulation of nodulation (AON), a long distance systemic signaling from root to shoot and back again, which allows legumes to limit the number of root nodules formed based on available nitrogen and previous rhizobial colonization. Functions in the root, upstream of the shoot receptor kinase SUNN and via CLE peptide, to control AON. This chain is Hydroxyproline O-arabinosyltransferase RDN2, found in Medicago truncatula (Barrel medic).